The primary structure comprises 236 residues: Small ribosomal subunit protein uS2c (236 aa).

This sequence belongs to the universal ribosomal protein uS2 family.

The protein resides in the plastid. Its subcellular location is the chloroplast. This Nymphaea alba (White water-lily) protein is Small ribosomal subunit protein uS2c (rps2).